Here is a 428-residue protein sequence, read N- to C-terminus: Somatostatin receptor type 3 (428 aa).

Residues 1 to 45 lie on the Extracellular side of the membrane; that stretch reads MAAVTYPSSVPTTLDPGNASSAWPLDTSLGNASAGTSLAGLAVSG. Asn18 and Asn31 each carry an N-linked (GlcNAc...) asparagine glycan. Residues 46 to 71 form a helical membrane-spanning segment; sequence ILISLVYLVVCVVGLLGNSLVIYVVL. Topologically, residues 72–81 are cytoplasmic; sequence RHTSSPSVTS. A helical membrane pass occupies residues 82 to 103; that stretch reads VYILNLALADELFMLGLPFLAA. Over 104-118 the chain is Extracellular; sequence QNALSYWPFGSLMCR. An intrachain disulfide couples Cys117 to Cys192. Residues 119-140 form a helical membrane-spanning segment; sequence LVMAVDGINQFTSIFCLTVMSV. The Cytoplasmic segment spans residues 141 to 162; the sequence is DRYLAVVHPTRSARWRTAPVAR. Residues 163 to 182 traverse the membrane as a helical segment; the sequence is MVSAAVWVASAVVVLPVVVF. The Extracellular segment spans residues 183 to 206; it reads SGVPRGMSTCHMQWPEPAAAWRTA. The chain crosses the membrane as a helical span at residues 207-232; that stretch reads FIIYTAALGFFGPLLVICLCYLLIVV. The Cytoplasmic segment spans residues 233 to 266; the sequence is KVRSTTRRVRAPSCQWVQAPACQRRRRSERRVTR. A helical membrane pass occupies residues 267–288; it reads MVVAVVALFVLCWMPFYLLNIV. Residues 289–302 are Extracellular-facing; the sequence is NVVCPLPEEPAFFG. The helical transmembrane segment at 303–325 threads the bilayer; the sequence is LYFLVVALPYANSCANPILYGFL. Residues 326 to 428 lie on the Cytoplasmic side of the membrane; that stretch reads SYRFKQGFRR…GDKASTLSHL (103 aa). A phosphoserine mark is found at Ser341, Ser346, and Ser351. The disordered stretch occupies residues 343–428; that stretch reads RVRSQEPGSG…GDKASTLSHL (86 aa). A Phosphothreonine modification is found at Thr357. Over residues 357 to 370 the composition is skewed to acidic residues; the sequence is TEEEEDEEEEERRE. Residues 385–412 show a composition bias toward polar residues; that stretch reads RLSQIAQPGPSGQQQRPCTGTAKEQQLL.

The protein belongs to the G-protein coupled receptor 1 family. Homodimer and heterodimer with SSTR2. Heterodimerization with SSTR2 inactivates SSTR3 receptor function. Phosphorylated. Phosphorylation increases upon somatostatin binding. In terms of tissue distribution, densely expressed in cerebellum and at moderate levels in the amygdala, cortex, striatum, spleen, liver and pituitary.

It localises to the cell membrane. Receptor for somatostatin-14 and -28. This receptor is coupled via pertussis toxin sensitive G proteins to inhibition of adenylyl cyclase. The sequence is that of Somatostatin receptor type 3 (Sstr3) from Rattus norvegicus (Rat).